Here is a 349-residue protein sequence, read N- to C-terminus: S-adenosylmethionine:tRNA ribosyltransferase-isomerase (349 aa).

The protein belongs to the QueA family. In terms of assembly, monomer.

The protein localises to the cytoplasm. It catalyses the reaction 7-aminomethyl-7-carbaguanosine(34) in tRNA + S-adenosyl-L-methionine = epoxyqueuosine(34) in tRNA + adenine + L-methionine + 2 H(+). It functions in the pathway tRNA modification; tRNA-queuosine biosynthesis. In terms of biological role, transfers and isomerizes the ribose moiety from AdoMet to the 7-aminomethyl group of 7-deazaguanine (preQ1-tRNA) to give epoxyqueuosine (oQ-tRNA). The sequence is that of S-adenosylmethionine:tRNA ribosyltransferase-isomerase from Cupriavidus pinatubonensis (strain JMP 134 / LMG 1197) (Cupriavidus necator (strain JMP 134)).